A 250-amino-acid polypeptide reads, in one-letter code: 3-deoxy-manno-octulosonate cytidylyltransferase (250 aa).

The protein belongs to the KdsB family.

It is found in the cytoplasm. The catalysed reaction is 3-deoxy-alpha-D-manno-oct-2-ulosonate + CTP = CMP-3-deoxy-beta-D-manno-octulosonate + diphosphate. The protein operates within nucleotide-sugar biosynthesis; CMP-3-deoxy-D-manno-octulosonate biosynthesis; CMP-3-deoxy-D-manno-octulosonate from 3-deoxy-D-manno-octulosonate and CTP: step 1/1. It functions in the pathway bacterial outer membrane biogenesis; lipopolysaccharide biosynthesis. Functionally, activates KDO (a required 8-carbon sugar) for incorporation into bacterial lipopolysaccharide in Gram-negative bacteria. The polypeptide is 3-deoxy-manno-octulosonate cytidylyltransferase (Legionella pneumophila (strain Corby)).